The sequence spans 709 residues: Phosphoribosylformylglycinamidine synthase subunit PurL (709 aa).

H36 is a catalytic residue. Residues Y39 and K80 each coordinate ATP. E82 serves as a coordination point for Mg(2+). Substrate contacts are provided by residues 83–86 and R105; that span reads SHNH. The active-site Proton acceptor is the H84. Position 106 (D106) interacts with Mg(2+). Residue Q226 coordinates substrate. D252 is a binding site for Mg(2+). 294–296 lines the substrate pocket; that stretch reads ETQ. D470 and G507 together coordinate ATP. S510 contributes to the substrate binding site.

The protein belongs to the FGAMS family. Monomer. Part of the FGAM synthase complex composed of 1 PurL, 1 PurQ and 2 PurS subunits.

It is found in the cytoplasm. It carries out the reaction N(2)-formyl-N(1)-(5-phospho-beta-D-ribosyl)glycinamide + L-glutamine + ATP + H2O = 2-formamido-N(1)-(5-O-phospho-beta-D-ribosyl)acetamidine + L-glutamate + ADP + phosphate + H(+). The protein operates within purine metabolism; IMP biosynthesis via de novo pathway; 5-amino-1-(5-phospho-D-ribosyl)imidazole from N(2)-formyl-N(1)-(5-phospho-D-ribosyl)glycinamide: step 1/2. Its function is as follows. Part of the phosphoribosylformylglycinamidine synthase complex involved in the purines biosynthetic pathway. Catalyzes the ATP-dependent conversion of formylglycinamide ribonucleotide (FGAR) and glutamine to yield formylglycinamidine ribonucleotide (FGAM) and glutamate. The FGAM synthase complex is composed of three subunits. PurQ produces an ammonia molecule by converting glutamine to glutamate. PurL transfers the ammonia molecule to FGAR to form FGAM in an ATP-dependent manner. PurS interacts with PurQ and PurL and is thought to assist in the transfer of the ammonia molecule from PurQ to PurL. This is Phosphoribosylformylglycinamidine synthase subunit PurL from Saccharolobus islandicus (strain M.14.25 / Kamchatka #1) (Sulfolobus islandicus).